Consider the following 341-residue polypeptide: Putative casein kinase I C03C10.2 (341 aa).

The 277-residue stretch at 50–326 folds into the Protein kinase domain; that stretch reads WSIEGVIGNG…KCLYSPKSLL (277 aa). ATP is bound by residues 56 to 64 and Lys79; that span reads IGNGGYGQI. Asp173 functions as the Proton acceptor in the catalytic mechanism.

Belongs to the protein kinase superfamily. CK1 Ser/Thr protein kinase family. Casein kinase I subfamily.

The catalysed reaction is L-seryl-[protein] + ATP = O-phospho-L-seryl-[protein] + ADP + H(+). It carries out the reaction L-threonyl-[protein] + ATP = O-phospho-L-threonyl-[protein] + ADP + H(+). The chain is Putative casein kinase I C03C10.2 from Caenorhabditis elegans.